The sequence spans 600 residues: CDK5RAP1-like protein (600 aa).

A disordered region spans residues 45-66; that stretch reads LSSAAHPPPPPPRRLARSGPSR. An MTTase N-terminal domain is found at 93 to 222; sequence GRIYHETYGC…LPRLLQEVDY (130 aa). [4Fe-4S] cluster contacts are provided by Cys-102, Cys-139, Cys-185, Cys-260, Cys-264, and Cys-267. The Radical SAM core domain occupies 246 to 501; it reads SDNSVTAFVS…ISTFRETTAK (256 aa). Positions 504–580 constitute a TRAM domain; sequence DSQVGTVQLV…TASLSGDVIA (77 aa).

It belongs to the methylthiotransferase family. MiaB subfamily. Requires [4Fe-4S] cluster as cofactor.

Functionally, potential regulator of CDK5 activity. The sequence is that of CDK5RAP1-like protein from Oryza sativa subsp. japonica (Rice).